We begin with the raw amino-acid sequence, 417 residues long: UDP-N-acetylmuramoylalanine--D-glutamate ligase (417 aa).

104 to 110 lines the ATP pocket; that stretch reads GSNGKST.

It belongs to the MurCDEF family.

Its subcellular location is the cytoplasm. The enzyme catalyses UDP-N-acetyl-alpha-D-muramoyl-L-alanine + D-glutamate + ATP = UDP-N-acetyl-alpha-D-muramoyl-L-alanyl-D-glutamate + ADP + phosphate + H(+). Its pathway is cell wall biogenesis; peptidoglycan biosynthesis. Functionally, cell wall formation. Catalyzes the addition of glutamate to the nucleotide precursor UDP-N-acetylmuramoyl-L-alanine (UMA). The sequence is that of UDP-N-acetylmuramoylalanine--D-glutamate ligase from Francisella tularensis subsp. novicida (strain U112).